A 639-amino-acid polypeptide reads, in one-letter code: Muscarinic acetylcholine receptor M3 (639 aa).

At 1–115 (MLTHYQLCFQ…DPLGGHAVWQ (115 aa)) the chain is on the extracellular side. N-linked (GlcNAc...) asparagine glycans are attached at residues N16, N44, N45, N54, N97, and N101. Residues 116-139 (VVLIAFLTGIIALVTIIGNILVIV) form a helical membrane-spanning segment. Residues 140 to 152 (SFKVNKQLKTVNN) are Cytoplasmic-facing. A helical membrane pass occupies residues 153–173 (YFLLSLACADLIIGVISMNLF). Topologically, residues 174-190 (TTYIIMGHWALGNLACD) are extracellular. C189 and C269 are disulfide-bonded. The helical transmembrane segment at 191-212 (LWLSIDYVASNASVMNLLVISF) threads the bilayer. Topologically, residues 213–232 (DRYFSITRPLTYRAKRTTKR) are cytoplasmic. Residues 233–255 (AGVMIGLAWIISFVLWAPAILFW) traverse the membrane as a helical segment. The Extracellular portion of the chain corresponds to 256 to 277 (QYFVGKRTVPLDECFIQFLSEP). The helical transmembrane segment at 278-300 (IITFGTAIAAFYLPVTIMSILYW) threads the bilayer. Residues 301–542 (RIYKETEKRT…LIKEKKAAQT (242 aa)) are Cytoplasmic-facing. Disordered regions lie at residues 370 to 404 (PNTD…DEED) and 431 to 471 (LPSS…GGSF). Residues 382–393 (SDSWNNNDAAAS) are compositionally biased toward low complexity. The segment covering 443–454 (ELQKSDTDSQEK) has biased composition (basic and acidic residues). Residues 543–563 (LSAILFAFIITWTPYNIMVLV) form a helical membrane-spanning segment. At 564-576 (NTFCDCVPKTVWN) the chain is on the extracellular side. Residues 577–596 (LGYWLCYINSTVNPVCYALC) form a helical membrane-spanning segment. Topologically, residues 597-639 (NKMFRNTFKMLLLCQCDKRKRRKQQYQQRQSVIFHKRIPREAS) are cytoplasmic.

Belongs to the G-protein coupled receptor 1 family. Muscarinic acetylcholine receptor subfamily. CHRM3 sub-subfamily. In terms of tissue distribution, brain, heart atria, and ventricle.

It is found in the cell membrane. Its subcellular location is the postsynaptic cell membrane. Its function is as follows. The muscarinic acetylcholine receptor mediates various cellular responses, including inhibition of adenylate cyclase, breakdown of phosphoinositides and modulation of potassium channels through the action of G proteins. Primary transducing effect is Pi turnover. This is Muscarinic acetylcholine receptor M3 (CHRM3) from Gallus gallus (Chicken).